The sequence spans 147 residues: Large ribosomal subunit protein uL13 (147 aa).

The tract at residues 128–147 is disordered; it reads PEHPHSAQQPVPYELKQVAQ.

The protein belongs to the universal ribosomal protein uL13 family. As to quaternary structure, part of the 50S ribosomal subunit.

This protein is one of the early assembly proteins of the 50S ribosomal subunit, although it is not seen to bind rRNA by itself. It is important during the early stages of 50S assembly. In Mycobacterium bovis (strain BCG / Pasteur 1173P2), this protein is Large ribosomal subunit protein uL13.